The primary structure comprises 652 residues: Acetyl-coenzyme A synthetase (652 aa).

CoA is bound by residues 191 to 194 (RAGR), threonine 311, and asparagine 335. ATP is bound by residues 387-389 (GEP), 411-416 (DTWWQT), aspartate 500, and arginine 515. Serine 523 is a binding site for CoA. Arginine 526 is an ATP binding site. Mg(2+)-binding residues include valine 537, histidine 539, and isoleucine 542. Arginine 584 provides a ligand contact to CoA. Position 609 is an N6-acetyllysine (lysine 609).

It belongs to the ATP-dependent AMP-binding enzyme family. The cofactor is Mg(2+). In terms of processing, acetylated. Deacetylation by the SIR2-homolog deacetylase activates the enzyme.

The catalysed reaction is acetate + ATP + CoA = acetyl-CoA + AMP + diphosphate. Its function is as follows. Catalyzes the conversion of acetate into acetyl-CoA (AcCoA), an essential intermediate at the junction of anabolic and catabolic pathways. Acs undergoes a two-step reaction. In the first half reaction, Acs combines acetate with ATP to form acetyl-adenylate (AcAMP) intermediate. In the second half reaction, it can then transfer the acetyl group from AcAMP to the sulfhydryl group of CoA, forming the product AcCoA. In terms of biological role, enables the cell to use acetate during aerobic growth to generate energy via the TCA cycle, and biosynthetic compounds via the glyoxylate shunt. Acetylates CheY, the response regulator involved in flagellar movement and chemotaxis. This is Acetyl-coenzyme A synthetase from Escherichia coli O157:H7.